A 650-amino-acid polypeptide reads, in one-letter code: Macrolide export ATP-binding/permease protein MacB (650 aa).

The ABC transporter domain maps to 9-248 (IELIDLERVF…RPLGRPPGGA (240 aa)). 45–52 (GQSGSGKS) is an ATP binding site. A run of 4 helical transmembrane segments spans residues 276–296 (ALTL…MAIG), 525–545 (LTLL…IGVM), 580–600 (AVAV…GAAL), and 615–635 (PPIV…YLPA).

It belongs to the ABC transporter superfamily. Macrolide exporter (TC 3.A.1.122) family. As to quaternary structure, homodimer.

It localises to the cell inner membrane. Functionally, non-canonical ABC transporter that contains transmembrane domains (TMD), which form a pore in the inner membrane, and an ATP-binding domain (NBD), which is responsible for energy generation. Confers resistance against macrolides. The protein is Macrolide export ATP-binding/permease protein MacB of Rhodospirillum rubrum (strain ATCC 11170 / ATH 1.1.1 / DSM 467 / LMG 4362 / NCIMB 8255 / S1).